A 595-amino-acid chain; its full sequence is DNA polymerase (595 aa).

In terms of domain architecture, 3'-5' exonuclease spans 1–212; the sequence is MIELRHEVQG…CKSLTPLVPD (212 aa). The tract at residues 213–595 is polymerase; the sequence is VSRSLVPYEH…SWGSLYGADY (383 aa).

The protein belongs to the DNA polymerase type-A family.

The enzyme catalyses DNA(n) + a 2'-deoxyribonucleoside 5'-triphosphate = DNA(n+1) + diphosphate. Its function is as follows. Replicates viral genomic DNA. This polymerase possesses two enzymatic activities: DNA synthesis (polymerase) and an exonucleolytic activity that degrades single-stranded DNA in the 3'-5' direction. This chain is DNA polymerase (44), found in Mycobacterium phage L5 (Mycobacteriophage L5).